A 442-amino-acid polypeptide reads, in one-letter code: Probable carboxypeptidase PABG_01461 (442 aa).

The N-terminal stretch at 1 to 20 (MKLQYLVALLSVQAVPPVTA) is a signal peptide. Asn-102 is a glycosylation site (N-linked (GlcNAc...) asparagine). Asp-160 lines the Zn(2+) pocket. The active-site Proton acceptor is Glu-192. Residue Glu-193 participates in Zn(2+) binding. Asn-343 carries an N-linked (GlcNAc...) asparagine glycan.

Belongs to the peptidase M20A family. Requires Zn(2+) as cofactor.

Its subcellular location is the secreted. This is Probable carboxypeptidase PABG_01461 from Paracoccidioides brasiliensis (strain Pb03).